Here is a 418-residue protein sequence, read N- to C-terminus: Thyroxine-binding globulin (418 aa).

An N-terminal signal peptide occupies residues 1-20 (MSMFFYLFLLVLGLQATIHC). N-linked (GlcNAc...) asparagine glycosylation is found at asparagine 24, asparagine 39, asparagine 102, asparagine 168, asparagine 227, and asparagine 256. Asparagine 296 and lysine 401 together coordinate thyroxine.

This sequence belongs to the serpin family. As to expression, expressed by the liver and secreted in plasma.

The protein resides in the secreted. Functionally, major thyroid hormone transport protein in serum. This Rattus norvegicus (Rat) protein is Thyroxine-binding globulin (Serpina7).